Consider the following 255-residue polypeptide: tRNA (guanine-N(1)-)-methyltransferase (255 aa).

S-adenosyl-L-methionine contacts are provided by residues Gly117 and Leu137–Leu142.

Belongs to the RNA methyltransferase TrmD family. Homodimer.

Its subcellular location is the cytoplasm. The catalysed reaction is guanosine(37) in tRNA + S-adenosyl-L-methionine = N(1)-methylguanosine(37) in tRNA + S-adenosyl-L-homocysteine + H(+). In terms of biological role, specifically methylates guanosine-37 in various tRNAs. The chain is tRNA (guanine-N(1)-)-methyltransferase from Paraburkholderia phymatum (strain DSM 17167 / CIP 108236 / LMG 21445 / STM815) (Burkholderia phymatum).